The chain runs to 247 residues: Cell division protein ZapD (247 aa).

The protein belongs to the ZapD family. As to quaternary structure, interacts with FtsZ.

The protein resides in the cytoplasm. Cell division factor that enhances FtsZ-ring assembly. Directly interacts with FtsZ and promotes bundling of FtsZ protofilaments, with a reduction in FtsZ GTPase activity. In Shigella boydii serotype 4 (strain Sb227), this protein is Cell division protein ZapD.